The chain runs to 328 residues: tRNA uridine(34) hydroxylase (328 aa).

In terms of domain architecture, Rhodanese spans 123 to 217; the sequence is SDPDVLLVDT…YLEEVPQEES (95 aa). Residue Cys177 is the Cysteine persulfide intermediate of the active site.

This sequence belongs to the TrhO family.

The catalysed reaction is uridine(34) in tRNA + AH2 + O2 = 5-hydroxyuridine(34) in tRNA + A + H2O. Functionally, catalyzes oxygen-dependent 5-hydroxyuridine (ho5U) modification at position 34 in tRNAs. This Psychromonas ingrahamii (strain DSM 17664 / CCUG 51855 / 37) protein is tRNA uridine(34) hydroxylase.